The primary structure comprises 214 residues: Charged multivesicular body protein 2b-A (214 aa).

A coiled-coil region spans residues 25–55; that stretch reads QRAITRDRTALEKQEKQLEMEIKKMAKAGNK. Residues 178 to 214 form a disordered region; it reads MAKAPSAAKGLPSASASKSTGISDEEIERQLKALGVD. The short motif at 202–212 is the MIT-interacting motif element; it reads EEIERQLKALG.

The protein belongs to the SNF7 family. As to quaternary structure, probable core component of the endosomal sorting required for transport complex III (ESCRT-III). ESCRT-III components are thought to multimerize to form a flat lattice on the perimeter membrane of the endosome.

Its subcellular location is the cytoplasm. The protein resides in the cytosol. It localises to the late endosome membrane. Its function is as follows. Probable core component of the endosomal sorting required for transport complex III (ESCRT-III) which is involved in multivesicular bodies (MVBs) formation and sorting of endosomal cargo proteins into MVBs. MVBs contain intraluminal vesicles (ILVs) that are generated by invagination and scission from the limiting membrane of the endosome and mostly are delivered to lysosomes enabling degradation of membrane proteins, such as stimulated growth factor receptors, lysosomal enzymes and lipids. The sequence is that of Charged multivesicular body protein 2b-A (chmp2b-a) from Xenopus laevis (African clawed frog).